A 141-amino-acid chain; its full sequence is Acetyltransferase YpeA (141 aa).

The N-acetyltransferase domain occupies 1 to 141 (MEIRVFRQED…GKRLIEDEEY (141 aa)).

The protein belongs to the acetyltransferase family. YpeA subfamily.

In Shigella boydii serotype 4 (strain Sb227), this protein is Acetyltransferase YpeA.